We begin with the raw amino-acid sequence, 283 residues long: Pantothenate synthetase (283 aa).

34-41 (MGALHEGH) serves as a coordination point for ATP. The active-site Proton donor is histidine 41. A (R)-pantoate-binding site is contributed by glutamine 65. Glutamine 65 is a beta-alanine binding site. 152–155 (GQKD) provides a ligand contact to ATP. Glutamine 158 provides a ligand contact to (R)-pantoate. ATP is bound by residues valine 181 and 189–192 (MSSR).

It belongs to the pantothenate synthetase family. In terms of assembly, homodimer.

The protein localises to the cytoplasm. The enzyme catalyses (R)-pantoate + beta-alanine + ATP = (R)-pantothenate + AMP + diphosphate + H(+). It participates in cofactor biosynthesis; (R)-pantothenate biosynthesis; (R)-pantothenate from (R)-pantoate and beta-alanine: step 1/1. Its function is as follows. Catalyzes the condensation of pantoate with beta-alanine in an ATP-dependent reaction via a pantoyl-adenylate intermediate. The sequence is that of Pantothenate synthetase from Nitrobacter winogradskyi (strain ATCC 25391 / DSM 10237 / CIP 104748 / NCIMB 11846 / Nb-255).